The following is a 426-amino-acid chain: Gamma-glutamyl phosphate reductase (426 aa).

It belongs to the gamma-glutamyl phosphate reductase family.

The protein resides in the cytoplasm. The enzyme catalyses L-glutamate 5-semialdehyde + phosphate + NADP(+) = L-glutamyl 5-phosphate + NADPH + H(+). It functions in the pathway amino-acid biosynthesis; L-proline biosynthesis; L-glutamate 5-semialdehyde from L-glutamate: step 2/2. Its function is as follows. Catalyzes the NADPH-dependent reduction of L-glutamate 5-phosphate into L-glutamate 5-semialdehyde and phosphate. The product spontaneously undergoes cyclization to form 1-pyrroline-5-carboxylate. The polypeptide is Gamma-glutamyl phosphate reductase (Cupriavidus necator (strain ATCC 17699 / DSM 428 / KCTC 22496 / NCIMB 10442 / H16 / Stanier 337) (Ralstonia eutropha)).